The following is a 185-amino-acid chain: Lectin B4 (185 aa).

The N-linked (GlcNAc...) asparagine glycan is linked to Asn-48. Mn(2+)-binding residues include Glu-111 and Asp-113. Ca(2+) is bound by residues Asp-113, Tyr-115, Asn-117, and Asp-120. Asp-120 contacts Mn(2+). Residue Asn-122 is glycosylated (N-linked (GlcNAc...) asparagine). His-125 lines the Mn(2+) pocket.

It belongs to the leguminous lectin family. Homo- or heterotetramer. V.villosa isolectins are composed of either two subunits a and two subunits B (A2B2), four subunits A (A4), or four subunits B (B4). The predominant form, isolectin B4, has no A1 erythrocyte agglutinating activity.

In terms of biological role, N-acetyl-D-galactosamine specific lectin. Binds the Tn determinant (GalNAc-alpha-O-Ser/Thr) of the tumor-associated glycopeptide. Could be required for agglutinating cells such as Tn-exposed erythrocytes. In Vicia villosa (Hairy vetch), this protein is Lectin B4.